The chain runs to 215 residues: Nucleoside triphosphate pyrophosphatase (215 aa).

Asp77 acts as the Proton acceptor in catalysis.

The protein belongs to the Maf family. A divalent metal cation is required as a cofactor.

It localises to the cytoplasm. It carries out the reaction a ribonucleoside 5'-triphosphate + H2O = a ribonucleoside 5'-phosphate + diphosphate + H(+). It catalyses the reaction a 2'-deoxyribonucleoside 5'-triphosphate + H2O = a 2'-deoxyribonucleoside 5'-phosphate + diphosphate + H(+). In terms of biological role, nucleoside triphosphate pyrophosphatase. May have a dual role in cell division arrest and in preventing the incorporation of modified nucleotides into cellular nucleic acids. The sequence is that of Nucleoside triphosphate pyrophosphatase from Rickettsia peacockii (strain Rustic).